Reading from the N-terminus, the 391-residue chain is 3-ketoacyl-CoA thiolase (391 aa).

Cys-95 (acyl-thioester intermediate) is an active-site residue. Active-site proton acceptor residues include His-347 and Cys-377.

Belongs to the thiolase-like superfamily. Thiolase family. Heterotetramer of two alpha chains (FadB) and two beta chains (FadA).

The protein localises to the cytoplasm. The enzyme catalyses an acyl-CoA + acetyl-CoA = a 3-oxoacyl-CoA + CoA. It participates in lipid metabolism; fatty acid beta-oxidation. Catalyzes the final step of fatty acid oxidation in which acetyl-CoA is released and the CoA ester of a fatty acid two carbons shorter is formed. The chain is 3-ketoacyl-CoA thiolase from Pseudomonas fragi.